We begin with the raw amino-acid sequence, 741 residues long: Zinc finger and BTB domain-containing protein 20 (741 aa).

Over residues 1–17 (MLERKKPKTAENQKASE) the composition is skewed to basic and acidic residues. The disordered stretch occupies residues 1-32 (MLERKKPKTAENQKASEENEITQPGGSSAKPG). A BTB domain is found at 104-167 (CDVTVRIHGS…MYSGVLRVSQ (64 aa)). A disordered region spans residues 203-235 (GIQDSGQDTPRGTPESGTSGQSSDTESGYLQSH). Polar residues predominate over residues 206–235 (DSGQDTPRGTPESGTSGQSSDTESGYLQSH). Position 211 is a phosphothreonine (T211). K330 is covalently cross-linked (Glycyl lysine isopeptide (Lys-Gly) (interchain with G-Cter in SUMO1); alternate). K330 is covalently cross-linked (Glycyl lysine isopeptide (Lys-Gly) (interchain with G-Cter in SUMO2); alternate). Residues 350–440 (RNESEECTED…SSPERSNEVE (91 aa)) form a disordered region. S353 bears the Phosphoserine mark. Acidic residues predominate over residues 354–367 (EECTEDTDQAEGTE). Phosphothreonine is present on T357. Residue K371 forms a Glycyl lysine isopeptide (Lys-Gly) (interchain with G-Cter in SUMO2) linkage. The span at 404 to 423 (AEPTQPEQAAEAPAEGGPQT) shows a compositional bias: low complexity. Positions 424–434 (NQLETGASSPE) are enriched in polar residues. C2H2-type zinc fingers lie at residues 578-600 (YECT…MFVH), 606-628 (HQCS…MVTH), 634-656 (YQCS…MRLH), and 662-684 (YECY…VALH). Phosphothreonine occurs at positions 690 and 695. The segment at 715–737 (YVCSVCPAKFDQIEQFNDHMRMH) adopts a C2H2-type 5 zinc-finger fold. Residue K723 forms a Glycyl lysine isopeptide (Lys-Gly) (interchain with G-Cter in SUMO2) linkage.

As to quaternary structure, can homodimerize. Binds to DNA. In terms of processing, sumoylated with SUMO1. Expressed in spleen, lymph node, thymus, peripheral blood leukocytes, and fetal liver.

The protein resides in the nucleus. In terms of biological role, may be a transcription factor that may be involved in hematopoiesis, oncogenesis, and immune responses. Plays a role in postnatal myogenesis, may be involved in the regulation of satellite cells self-renewal. This Homo sapiens (Human) protein is Zinc finger and BTB domain-containing protein 20 (ZBTB20).